A 1887-amino-acid polypeptide reads, in one-letter code: Fatty acid synthase subunit alpha (1887 aa).

Lysine 37 participates in a covalent cross-link: Glycyl lysine isopeptide (Lys-Gly) (interchain with G-Cter in ubiquitin). Serine 50 is modified (phosphoserine). The interval 96–120 (ELAAKEEPAKEEAPAPTPAASAPAP) is disordered. Over residues 98-108 (AAKEEPAKEEA) the composition is skewed to basic and acidic residues. Positions 145 to 220 (VKASLLLHVL…ETFQDTFSGA (76 aa)) constitute a Carrier domain. O-(pantetheine 4'-phosphoryl)serine is present on serine 180. Phosphoserine is present on serine 523. Positions 675-874 (DKYVLITGAG…CGAIIGWTRG (200 aa)) are beta-ketoacyl reductase. Serine 958 bears the Phosphoserine mark. The region spanning 1123-1657 (QEVIVEEDLE…QKGGQAIVVH (535 aa)) is the Ketosynthase family 3 (KS3) domain. Cysteine 1305 serves as the catalytic For beta-ketoacyl synthase activity. The residue at position 1440 (serine 1440) is a Phosphoserine. Active-site for beta-ketoacyl synthase activity residues include histidine 1542 and histidine 1583. Mg(2+) is bound by residues aspartate 1772, valine 1773, and glutamate 1774. Acetyl-CoA-binding positions include 1772 to 1774 (DVE), tyrosine 1798, serine 1808, 1817 to 1827 (EAVFKSLGVKS), 1841 to 1844 (RVNK), and 1871 to 1873 (ISH). Positions 1872 and 1873 each coordinate Mg(2+).

It belongs to the thiolase-like superfamily. Fungal fatty acid synthetase subunit alpha family. As to quaternary structure, [Alpha(6)beta(6)] hexamers of two multifunctional subunits (alpha and beta). In terms of processing, 4'-phosphopantetheine is transferred from CoA to a specific serine of the Acyl carrier domain by the C-terminal PPT domain. This modification is essential for activity because fatty acids are bound in thioester linkage to the sulfhydryl of the prosthetic group.

It carries out the reaction acetyl-CoA + n malonyl-CoA + 2n NADPH + 4n H(+) = a long-chain-acyl-CoA + n CoA + n CO2 + 2n NADP(+).. It catalyses the reaction a fatty acyl-[ACP] + malonyl-[ACP] + H(+) = a 3-oxoacyl-[ACP] + holo-[ACP] + CO2. The catalysed reaction is a (3R)-hydroxyacyl-[ACP] + NADP(+) = a 3-oxoacyl-[ACP] + NADPH + H(+). Its activity is regulated as follows. Inhibited by cerulenin by covalent binding to active site of the ketoacyl synthase (KS) region. Fatty acid synthetase catalyzes the formation of long-chain fatty acids from acetyl-CoA, malonyl-CoA and NADPH. The alpha subunit contains domains for: acyl carrier protein, 3-oxoacyl-[acyl-carrier-protein] reductase, and 3-oxoacyl-[acyl-carrier-protein] synthase. This subunit coordinates the binding of the six beta subunits to the enzyme complex. In Saccharomyces cerevisiae (strain ATCC 204508 / S288c) (Baker's yeast), this protein is Fatty acid synthase subunit alpha (FAS2).